Here is a 70-residue protein sequence, read N- to C-terminus: MKNAIHPEYKEITATCSCGNIVTVGSTAGKNLTLDICGECHPFYTGTQRVVDTGGRIEKFKNRFGALGKK.

Zn(2+)-binding residues include Cys16, Cys18, Cys37, and Cys40.

The protein belongs to the bacterial ribosomal protein bL31 family. Type A subfamily. In terms of assembly, part of the 50S ribosomal subunit. Zn(2+) is required as a cofactor.

In terms of biological role, binds the 23S rRNA. The chain is Large ribosomal subunit protein bL31 from Psychromonas ingrahamii (strain DSM 17664 / CCUG 51855 / 37).